The primary structure comprises 354 residues: Carbamoyl phosphate synthase arginine-specific small chain (354 aa).

The CPSase stretch occupies residues 1-163; it reads MKAYLHVASG…RTIETYGEGG (163 aa). Residues serine 46, glycine 213, and glycine 215 each contribute to the L-glutamine site. The 188-residue stretch at 165–352 folds into the Glutamine amidotransferase type-1 domain; sequence HLVLVDFGYK…LQTVFKGENV (188 aa). Cysteine 240 acts as the Nucleophile in catalysis. L-glutamine is bound by residues leucine 241, glutamine 244, asparagine 282, and tyrosine 285. Catalysis depends on residues histidine 325 and glutamate 327.

The protein belongs to the CarA family. Composed of two chains; the small (or glutamine) chain promotes the hydrolysis of glutamine to ammonia, which is used by the large (or ammonia) chain to synthesize carbamoyl phosphate. Tetramer of heterodimers (alpha,beta)4.

It carries out the reaction hydrogencarbonate + L-glutamine + 2 ATP + H2O = carbamoyl phosphate + L-glutamate + 2 ADP + phosphate + 2 H(+). The catalysed reaction is L-glutamine + H2O = L-glutamate + NH4(+). It participates in amino-acid biosynthesis; L-arginine biosynthesis; carbamoyl phosphate from bicarbonate: step 1/1. Small subunit of the glutamine-dependent carbamoyl phosphate synthetase (CPSase). CPSase catalyzes the formation of carbamoyl phosphate from the ammonia moiety of glutamine, carbonate, and phosphate donated by ATP, constituting the first step of the biosynthetic pathway leading to arginine and/or urea. The small subunit (glutamine amidotransferase) binds and cleaves glutamine to supply the large subunit with the substrate ammonia. In Geobacillus stearothermophilus (Bacillus stearothermophilus), this protein is Carbamoyl phosphate synthase arginine-specific small chain.